Consider the following 436-residue polypeptide: MGQVLPLVTRQGDRIAIVSGLRTPFARQATAFHGIPAVDLGKMVVGELLARSEIPAEVIEQLVFGQVVQMPEAPNIAREIVLGTGMNVHTDAYSVSRACATSFQAVANVAESLMAGTIRAGIAGGADSSSVLPIGVSKKLARVLVDVNKARTMSQRLKLFSRLRLRDLMPVPPAVAEYSTGLRMGDTAEQMAKTYGITREQQDALAHRSHQRAAQAWSDGKLKEEVMTAFIPPYKQPLVEDNNIRGNSSLADYAKLRPAFDRKHGTVTAANSTPLTDGAAAVILMTESRAKELGLVPLGYLRSYAFTAIDVWQDMLFGPAWSTPLALERAGLTMSDLTLIDMHEAFAAQTLANIQLLGSERFAREVLGRAHATGEVDDSKFNVLGGSIAYGHPFAATGARMITQTLHELRRRGGGFGLVTACAAGGLGAAMVLEAE.

The Acyl-thioester intermediate role is filled by cysteine 99. Active-site proton acceptor residues include histidine 392 and cysteine 422.

Belongs to the thiolase-like superfamily. Thiolase family. As to quaternary structure, heterotetramer of two alpha chains (FadJ) and two beta chains (FadI).

Its subcellular location is the cytoplasm. It catalyses the reaction an acyl-CoA + acetyl-CoA = a 3-oxoacyl-CoA + CoA. It functions in the pathway lipid metabolism; fatty acid beta-oxidation. In terms of biological role, catalyzes the final step of fatty acid oxidation in which acetyl-CoA is released and the CoA ester of a fatty acid two carbons shorter is formed. The sequence is that of 3-ketoacyl-CoA thiolase from Shigella boydii serotype 18 (strain CDC 3083-94 / BS512).